The following is a 342-amino-acid chain: Thiosulfate/3-mercaptopyruvate sulfurtransferase 2 (342 aa).

Rhodanese domains are found at residues 56–173 (GDAD…DVES) and 224–338 (EDKT…LPIV). Cys-298 (cysteine persulfide intermediate) is an active-site residue.

Expressed in roots, rosette and cauline leaves, stems, flowers and siliques.

The protein resides in the cytoplasm. The catalysed reaction is thiosulfate + hydrogen cyanide = thiocyanate + sulfite + 2 H(+). It catalyses the reaction 2-oxo-3-sulfanylpropanoate + [thioredoxin]-dithiol = [thioredoxin]-disulfide + hydrogen sulfide + pyruvate + H(+). Functionally, catalyzes the transfer of a sulfur ion from a donor to cyanide or to other thiol compounds. Substrate preference is 3-mercaptopyruvate &gt; thiosulfate. Involved in embryo and seed development. The chain is Thiosulfate/3-mercaptopyruvate sulfurtransferase 2 (STR2) from Arabidopsis thaliana (Mouse-ear cress).